The primary structure comprises 311 residues: DNA replication terminus site-binding protein (311 aa).

It belongs to the Tus family.

Its subcellular location is the cytoplasm. Functionally, trans-acting protein required for termination of DNA replication. Binds to DNA replication terminator sequences (terA to terF) to prevent the passage of replication forks. The termination efficiency will be affected by the affinity of this protein for the terminator sequence. This is DNA replication terminus site-binding protein from Yersinia pseudotuberculosis serotype O:1b (strain IP 31758).